The chain runs to 499 residues: Glutamate--tRNA ligase (499 aa).

The 'HIGH' region signature appears at 12–22; sequence PSPTGHLHIGN. The 'KMSKS' region signature appears at 259–263; that stretch reads KLSKR. Lys-262 is a binding site for ATP.

It belongs to the class-I aminoacyl-tRNA synthetase family. Glutamate--tRNA ligase type 1 subfamily. As to quaternary structure, monomer.

Its subcellular location is the cytoplasm. The enzyme catalyses tRNA(Glu) + L-glutamate + ATP = L-glutamyl-tRNA(Glu) + AMP + diphosphate. Functionally, catalyzes the attachment of glutamate to tRNA(Glu) in a two-step reaction: glutamate is first activated by ATP to form Glu-AMP and then transferred to the acceptor end of tRNA(Glu). The polypeptide is Glutamate--tRNA ligase (Lactobacillus gasseri (strain ATCC 33323 / DSM 20243 / BCRC 14619 / CIP 102991 / JCM 1131 / KCTC 3163 / NCIMB 11718 / NCTC 13722 / AM63)).